The sequence spans 239 residues: Ribonuclease HII (239 aa).

Residues 18–231 (KIIVGLDEAG…SKNLLKEIEE (214 aa)) form the RNase H type-2 domain. A divalent metal cation-binding residues include D24, E25, and D125.

Belongs to the RNase HII family. The cofactor is Mn(2+). Requires Mg(2+) as cofactor.

It is found in the cytoplasm. The enzyme catalyses Endonucleolytic cleavage to 5'-phosphomonoester.. Endonuclease that specifically degrades the RNA of RNA-DNA hybrids. The chain is Ribonuclease HII from Methanococcus maripaludis (strain C7 / ATCC BAA-1331).